The following is a 292-amino-acid chain: Elongation factor Ts (292 aa).

Positions 79–82 (TDFV) are involved in Mg(2+) ion dislocation from EF-Tu.

This sequence belongs to the EF-Ts family.

It is found in the cytoplasm. Its function is as follows. Associates with the EF-Tu.GDP complex and induces the exchange of GDP to GTP. It remains bound to the aminoacyl-tRNA.EF-Tu.GTP complex up to the GTP hydrolysis stage on the ribosome. In Xanthomonas campestris pv. campestris (strain ATCC 33913 / DSM 3586 / NCPPB 528 / LMG 568 / P 25), this protein is Elongation factor Ts.